The following is a 70-amino-acid chain: Large ribosomal subunit protein bL31 (70 aa).

Residues C16, C18, C38, and C41 each contribute to the Zn(2+) site.

The protein belongs to the bacterial ribosomal protein bL31 family. Type A subfamily. As to quaternary structure, part of the 50S ribosomal subunit. It depends on Zn(2+) as a cofactor.

Binds the 23S rRNA. The protein is Large ribosomal subunit protein bL31 of Bifidobacterium adolescentis (strain ATCC 15703 / DSM 20083 / NCTC 11814 / E194a).